The sequence spans 222 residues: 7-cyano-7-deazaguanine synthase (222 aa).

8 to 18 is an ATP binding site; sequence LSGGMDSTTLA. Positions 188, 196, 199, and 202 each coordinate Zn(2+).

The protein belongs to the QueC family. It depends on Zn(2+) as a cofactor.

It carries out the reaction 7-carboxy-7-deazaguanine + NH4(+) + ATP = 7-cyano-7-deazaguanine + ADP + phosphate + H2O + H(+). It functions in the pathway purine metabolism; 7-cyano-7-deazaguanine biosynthesis. In terms of biological role, catalyzes the ATP-dependent conversion of 7-carboxy-7-deazaguanine (CDG) to 7-cyano-7-deazaguanine (preQ(0)). The polypeptide is 7-cyano-7-deazaguanine synthase (Methanoculleus marisnigri (strain ATCC 35101 / DSM 1498 / JR1)).